A 128-amino-acid polypeptide reads, in one-letter code: ADA histone acetyltransferase complex component 2 (128 aa).

It is found in the cytoplasm. It localises to the nucleus. The sequence is that of ADA histone acetyltransferase complex component 2 (AHC2) from Saccharomyces cerevisiae (strain ATCC 204508 / S288c) (Baker's yeast).